The primary structure comprises 166 residues: Interferon gamma (166 aa).

The signal sequence occupies residues 1–23; it reads MSYTTYFLAFQLCVTLCFSGSYC. Gln-24 is subject to Pyrrolidone carboxylic acid. 2 N-linked (GlcNAc...) asparagine glycosylation sites follow: Asn-39 and Asn-106.

Belongs to the type II (or gamma) interferon family. As to quaternary structure, homodimer. Interacts with IFNGR1 (via extracellular domain); this interaction promotes IFNGR1 dimerization. Released primarily from activated T lymphocytes.

The protein resides in the secreted. Functionally, type II interferon produced by immune cells such as T-cells and NK cells that plays crucial roles in antimicrobial, antiviral, and antitumor responses by activating effector immune cells and enhancing antigen presentation. Primarily signals through the JAK-STAT pathway after interaction with its receptor IFNGR1 to affect gene regulation. Upon IFNG binding, IFNGR1 intracellular domain opens out to allow association of downstream signaling components JAK2, JAK1 and STAT1, leading to STAT1 activation, nuclear translocation and transcription of IFNG-regulated genes. Many of the induced genes are transcription factors such as IRF1 that are able to further drive regulation of a next wave of transcription. Plays a role in class I antigen presentation pathway by inducing a replacement of catalytic proteasome subunits with immunoproteasome subunits. In turn, increases the quantity, quality, and repertoire of peptides for class I MHC loading. Increases the efficiency of peptide generation also by inducing the expression of activator PA28 that associates with the proteasome and alters its proteolytic cleavage preference. Up-regulates as well MHC II complexes on the cell surface by promoting expression of several key molecules such as cathepsins B/CTSB, H/CTSH, and L/CTSL. Participates in the regulation of hematopoietic stem cells during development and under homeostatic conditions by affecting their development, quiescence, and differentiation. The chain is Interferon gamma (IFNG) from Sus scrofa (Pig).